We begin with the raw amino-acid sequence, 296 residues long: Protoheme IX farnesyltransferase (296 aa).

Topologically, residues 1–9 are cytoplasmic; that stretch reads MMFKQYLQV. A helical membrane pass occupies residues 10–28; the sequence is TKPGIIFGNLISVIGGFLL. Residues 29–37 are Periplasmic-facing; the sequence is ASKGSIDYP. The helical transmembrane segment at 38 to 56 threads the bilayer; it reads LFIYTLVGVSLVVASGCVF. At 57-78 the chain is on the cytoplasmic side; it reads NNYIDRDIDRKMERTKNRVLVK. The chain crosses the membrane as a helical span at residues 79-97; it reads GLISPAVSLVYATLLGIAG. Residues 98–107 are Periplasmic-facing; that stretch reads FMLLWFGANP. A helical transmembrane segment spans residues 108–126; it reads LACWLGVMGFVVYVGVYSL. At 127–197 the chain is on the cytoplasmic side; that stretch reads YMKRHSVYGT…YQAANIPVLP (71 aa). Residues 198 to 216 traverse the membrane as a helical segment; that stretch reads VVKGISVAKNHITLYIIAF. Residues 217–228 lie on the Periplasmic side of the membrane; sequence AVATLMLSLGGY. The chain crosses the membrane as a helical span at residues 229-247; it reads AGYKYLVVAAAVSVWWLGM. Over 248-268 the chain is Cytoplasmic; that stretch reads ALRGYKVADDRIWARKLFGFS. The helical transmembrane segment at 269 to 287 threads the bilayer; sequence IIAITALSVMMSVDFMVPD. Topologically, residues 288-296 are periplasmic; the sequence is SHTLLAAVW.

The protein belongs to the UbiA prenyltransferase family. Protoheme IX farnesyltransferase subfamily.

The protein localises to the cell inner membrane. The enzyme catalyses heme b + (2E,6E)-farnesyl diphosphate + H2O = Fe(II)-heme o + diphosphate. It participates in porphyrin-containing compound metabolism; heme O biosynthesis; heme O from protoheme: step 1/1. Its function is as follows. Converts heme B (protoheme IX) to heme O by substitution of the vinyl group on carbon 2 of heme B porphyrin ring with a hydroxyethyl farnesyl side group. This Shigella flexneri protein is Protoheme IX farnesyltransferase.